Consider the following 419-residue polypeptide: Tyrosine--tRNA ligase 1 (419 aa).

Tyr35 lines the L-tyrosine pocket. The 'HIGH' region motif lies at 40–49 (PTAGSLHIGH). The L-tyrosine site is built by Tyr172 and Gln176. Positions 232–236 (KFGKT) match the 'KMSKS' region motif. Lys235 is a binding site for ATP. In terms of domain architecture, S4 RNA-binding spans 353–418 (QDLVELLIES…KKHFCLVKRA (66 aa)).

The protein belongs to the class-I aminoacyl-tRNA synthetase family. TyrS type 1 subfamily. Homodimer.

It localises to the cytoplasm. The enzyme catalyses tRNA(Tyr) + L-tyrosine + ATP = L-tyrosyl-tRNA(Tyr) + AMP + diphosphate + H(+). Catalyzes the attachment of tyrosine to tRNA(Tyr) in a two-step reaction: tyrosine is first activated by ATP to form Tyr-AMP and then transferred to the acceptor end of tRNA(Tyr). This Vibrio parahaemolyticus serotype O3:K6 (strain RIMD 2210633) protein is Tyrosine--tRNA ligase 1.